We begin with the raw amino-acid sequence, 49 residues long: Large ribosomal subunit protein eL40 (49 aa).

It belongs to the eukaryotic ribosomal protein eL40 family.

The chain is Large ribosomal subunit protein eL40 from Methanopyrus kandleri (strain AV19 / DSM 6324 / JCM 9639 / NBRC 100938).